Reading from the N-terminus, the 356-residue chain is Glutamine synthetase root isozyme 3 (356 aa).

A GS beta-grasp domain is found at 19 to 99 (IIAEYIWIGG…VMCDCYTPAG (81 aa)). One can recognise a GS catalytic domain in the interval 106–356 (KRYNAAKIFS…IAETTIIWKP (251 aa)).

It belongs to the glutamine synthetase family. As to quaternary structure, homooctamer. Found in all the tissues examined with higher expression found in tissues of the root.

It is found in the cytoplasm. It catalyses the reaction L-glutamate + NH4(+) + ATP = L-glutamine + ADP + phosphate + H(+). Its function is as follows. Plays a role in the flow of nitrogen into nitrogenous organic compounds. This is Glutamine synthetase root isozyme 3 (GLN4) from Zea mays (Maize).